Here is a 343-residue protein sequence, read N- to C-terminus: Dihydroorotate dehydrogenase (quinone) (343 aa).

FMN is bound by residues 61-65 (AGLDK) and Thr-85. Lys-65 contacts substrate. 110–114 (NRMGF) is a binding site for substrate. Residues Asn-138 and Asn-171 each coordinate FMN. Position 171 (Asn-171) interacts with substrate. Ser-174 (nucleophile) is an active-site residue. Asn-176 serves as a coordination point for substrate. 2 residues coordinate FMN: Lys-216 and Thr-244. Residue 245-246 (NT) participates in substrate binding. FMN contacts are provided by residues Gly-267, Gly-296, and 317–318 (YS).

It belongs to the dihydroorotate dehydrogenase family. Type 2 subfamily. In terms of assembly, monomer. Requires FMN as cofactor.

It is found in the cell membrane. The enzyme catalyses (S)-dihydroorotate + a quinone = orotate + a quinol. It functions in the pathway pyrimidine metabolism; UMP biosynthesis via de novo pathway; orotate from (S)-dihydroorotate (quinone route): step 1/1. Its function is as follows. Catalyzes the conversion of dihydroorotate to orotate with quinone as electron acceptor. This chain is Dihydroorotate dehydrogenase (quinone), found in Pseudomonas syringae pv. tomato (strain ATCC BAA-871 / DC3000).